We begin with the raw amino-acid sequence, 81 residues long: MAKIGVQSNLSDVQQELQSKGYEVVQIENEQDGQDCECCIVSGRNADVAGISVPGQMSIIHAEGLSAEEIGQRVDEIVTQH.

The protein belongs to the UPF0180 family.

The sequence is that of UPF0180 protein ABC2430 from Shouchella clausii (strain KSM-K16) (Alkalihalobacillus clausii).